The primary structure comprises 170 residues: Small ribosomal subunit protein uS5 (170 aa).

An S5 DRBM domain is found at 12-75; it reads WSELLVSVRR…NAAKKSMIRV (64 aa).

This sequence belongs to the universal ribosomal protein uS5 family. Part of the 30S ribosomal subunit. Contacts proteins S4 and S8.

With S4 and S12 plays an important role in translational accuracy. Its function is as follows. Located at the back of the 30S subunit body where it stabilizes the conformation of the head with respect to the body. The chain is Small ribosomal subunit protein uS5 from Wolbachia sp. subsp. Brugia malayi (strain TRS).